The chain runs to 1694 residues: Homeobox-DDT domain protein RLT2 (1694 aa).

The segment at 1–24 is disordered; that stretch reads MEGGSEKTTPEGCGGESKSKRKMK. Positions 17–76 form a DNA-binding region, homeobox; sequence SKSKRKMKTAAQLEVLENTYSAEPYPSEAIRADLSVKLNLSDRQLQMWFCHRRLKERKST. A DDT domain is found at 514 to 573; sequence DENVANLLMVWRFLITFADVLGLWPFTLDEFAQAFHDYDPRLMGEIHIVLLKTIIKDIEG. In terms of domain architecture, HTH HARE-type spans 696–765; it reads GTVKFAAFHV…APSTYCVRAS (70 aa). The segment covering 795–816 has biased composition (acidic residues); that stretch reads EDVDDAERDEDSESDVGEDPEV. 4 disordered regions span residues 795 to 822, 1450 to 1541, 1555 to 1639, and 1655 to 1674; these read EDVD…NLKK, KQEE…ICNE, AKTS…MNMK, and EDSY…AATR. Phosphoserine is present on residues Ser-806 and Ser-808. Residues 1459 to 1470 are compositionally biased toward gly residues; it reads GLGGVSSSGRGG. Composition is skewed to basic residues over residues 1471 to 1485 and 1515 to 1531; these read RPPR…RGNG and GGRK…RKRP. 3 stretches are compositionally biased toward acidic residues: residues 1561-1578, 1589-1605, and 1624-1635; these read DNDD…DDGE, EDYD…DFDG, and DEYEEEEEEEED.

As to quaternary structure, interacts with CHR11. Interacts (via the DDT domain) with CHR11 (via C-terminus). As to expression, highly expressed in growing tissues such as inflorescence and flower meristems, young leaves and floral organs. Expressed in roots, rosette and cauline leaves, stems, flowers, inflorescences and siliques.

It localises to the nucleus. Its function is as follows. Transcriptional regulator required for the maintenance of the plant vegetative phase. In association with CHR11 or CHR17 may prevent the early activation of the vegetative-to-reproductive transition by regulating key genes that contribute to flower timing, such as FT, SEP1, SEP3, AGL8/FUL, SOC1 and FLC. Involved in the transcriptional regulation of seed-specific gene expression. This is Homeobox-DDT domain protein RLT2 from Arabidopsis thaliana (Mouse-ear cress).